A 2183-amino-acid polypeptide reads, in one-letter code: Genome polyprotein (2183 aa).

G2 carries N-myristoyl glycine; by host lipidation. Over 2 to 1493 the chain is Cytoplasmic; sequence GAQVSTQKTG…HVSRAFICLQ (1492 aa). Positions 566 to 582 are amphipathic alpha-helix; the sequence is FYQGPTEESVERAMGRV. Catalysis depends on for protease 2A activity residues H870 and D888. The Zn(2+) site is built by C905 and C907. C959 serves as the catalytic For protease 2A activity. The Zn(2+) site is built by C965 and H967. Residues 1099 to 1171 are membrane-binding; that stretch reads NNNWLKKFTE…EQSAPSQSDQ (73 aa). The tract at residues 1099-1237 is oligomerization; that stretch reads NNNWLKKFTE…SPGAGKSVAT (139 aa). Residues 1120–1124 form an RNA-binding region; sequence AVKIQ. In terms of domain architecture, SF3 helicase spans 1203–1359; sequence EKKMSNYIQF…SMYSQNGKIN (157 aa). 3 residues coordinate Zn(2+): C1367, C1379, and C1384. A C4-type; degenerate zinc finger spans residues 1367–1384; it reads CDEECCPVNFKKCCPLVC. An RNA-binding region spans residues 1411–1418; the sequence is EYNHRHSV. The segment at 1422–1427 is oligomerization; that stretch reads LEALFQ. The stretch at 1494–1509 is an intramembrane region; that stretch reads ALTTFVSVAGIIYIIY. The Cytoplasmic segment spans residues 1510–2183; it reads KLFAGFQGAY…TLRRKWLDAF (674 aa). Residue Y1519 is modified to O-(5'-phospho-RNA)-tyrosine. A Peptidase C3 domain is found at 1539 to 1717; it reads GPAFEFAVAM…FSASLLRHYF (179 aa). Active-site for protease 3C activity residues include H1578, E1609, and C1685. Residues 1948–2064 enclose the RdRp catalytic domain; that stretch reads GHLRAFDYSG…SYPLPIDASL (117 aa). Residues D1954 and D2050 each coordinate Mg(2+).

Belongs to the picornaviruses polyprotein family. As to quaternary structure, interacts with capsid protein VP1 and capsid protein VP3 to form heterotrimeric protomers. In terms of assembly, interacts with capsid protein VP0, and capsid protein VP3 to form heterotrimeric protomers. Five protomers subsequently associate to form pentamers which serve as building blocks for the capsid. Interacts with capsid protein VP2, capsid protein VP3 and capsid protein VP4 following cleavage of capsid protein VP0. Interacts with host CXADR. Interacts with capsid protein VP1 and capsid protein VP3 in the mature capsid. As to quaternary structure, interacts with capsid protein VP0 and capsid protein VP1 to form heterotrimeric protomers. Five protomers subsequently associate to form pentamers which serve as building blocks for the capsid. Interacts with capsid protein VP4 in the mature capsid. Interacts with protein 2C; this interaction may be important for virion morphogenesis. In terms of assembly, interacts with capsid protein VP1 and capsid protein VP3. Homodimer. As to quaternary structure, homohexamer; forms a hexameric ring structure with 6-fold symmetry characteristic of AAA+ ATPases. Interacts (via N-terminus) with host RTN3 (via reticulon domain); this interaction is important for viral replication. Interacts with capsid protein VP3; this interaction may be important for virion morphogenesis. In terms of assembly, interacts with protein 3CD. Homodimer. Interacts with host GBF1. Interacts (via GOLD domain) with host ACBD3 (via GOLD domain); this interaction allows the formation of a viral protein 3A/ACBD3 heterotetramer with a 2:2 stoichiometry, which will stimulate the recruitment of host PI4KB in order to synthesize PI4P at the viral RNA replication sites. As to quaternary structure, interacts with RNA-directed RNA polymerase. In terms of assembly, interacts with protein 3AB and with RNA-directed RNA polymerase. Interacts with Viral protein genome-linked and with protein 3CD. The cofactor is Mg(2+). In terms of processing, specific enzymatic cleavages in vivo by the viral proteases yield processing intermediates and the mature proteins. Post-translationally, myristoylation is required for the formation of pentamers during virus assembly. Further assembly of 12 pentamers and a molecule of genomic RNA generates the provirion. During virion maturation, immature virions are rendered infectious following cleavage of VP0 into VP4 and VP2. This maturation seems to be an autocatalytic event triggered by the presence of RNA in the capsid and it is followed by a conformational change infectious virion. In terms of processing, myristoylation is required during RNA encapsidation and formation of the mature virus particle. Post-translationally, VPg is uridylylated by the polymerase into VPg-pUpU. This acts as a nucleotide-peptide primer for the genomic RNA replication.

Its subcellular location is the virion. The protein localises to the host cytoplasm. It is found in the host cytoplasmic vesicle membrane. The protein resides in the host nucleus. The enzyme catalyses a ribonucleoside 5'-triphosphate + H2O = a ribonucleoside 5'-diphosphate + phosphate + H(+). It catalyses the reaction Selective cleavage of Tyr-|-Gly bond in the picornavirus polyprotein.. It carries out the reaction RNA(n) + a ribonucleoside 5'-triphosphate = RNA(n+1) + diphosphate. The catalysed reaction is Selective cleavage of Gln-|-Gly bond in the poliovirus polyprotein. In other picornavirus reactions Glu may be substituted for Gln, and Ser or Thr for Gly.. Its activity is regulated as follows. Replication or transcription is subject to high level of random mutations by the nucleotide analog ribavirin. Its function is as follows. Forms an icosahedral capsid of pseudo T=3 symmetry with capsid proteins VP2 and VP3. The capsid is 300 Angstroms in diameter, composed of 60 copies of each capsid protein and enclosing the viral positive strand RNA genome. Capsid protein VP1 mainly forms the vertices of the capsid. Capsid protein VP1 interacts with host CXADR to provide virion attachment to target host cells. This attachment induces virion internalization. Tyrosine kinases are probably involved in the entry process. After binding to its receptor, the capsid undergoes conformational changes. Capsid protein VP1 N-terminus (that contains an amphipathic alpha-helix) and capsid protein VP4 are externalized. Together, they shape a pore in the host membrane through which viral genome is translocated to host cell cytoplasm. Functionally, forms an icosahedral capsid of pseudo T=3 symmetry with capsid proteins VP2 and VP3. The capsid is 300 Angstroms in diameter, composed of 60 copies of each capsid protein and enclosing the viral positive strand RNA genome. In terms of biological role, lies on the inner surface of the capsid shell. After binding to the host receptor, the capsid undergoes conformational changes. Capsid protein VP4 is released, Capsid protein VP1 N-terminus is externalized, and together, they shape a pore in the host membrane through which the viral genome is translocated into the host cell cytoplasm. Component of immature procapsids, which is cleaved into capsid proteins VP4 and VP2 after maturation. Allows the capsid to remain inactive before the maturation step. Its function is as follows. Cysteine protease that cleaves viral polyprotein and specific host proteins. It is responsible for the autocatalytic cleavage between the P1 and P2 regions, which is the first cleavage occurring in the polyprotein. Also cleaves the host translation initiation factor EIF4G1, in order to shut down the capped cellular mRNA translation. Inhibits the host nucleus-cytoplasm protein and RNA trafficking by cleaving host members of the nuclear pores. Counteracts stress granule formation probably by antagonizing its assembly or promoting its dissassembly. Cleaves and inhibits host IFIH1/MDA5, thereby inhibiting the type-I IFN production and the establishment of the antiviral state. Cleaves and inhibits host MAVS, thereby inhibiting the type-I IFN production and the establishment of the antiviral state. Functionally, plays an essential role in the virus replication cycle by acting as a viroporin. Creates a pore in the host endoplasmic reticulum and as a consequence releases Ca2+ in the cytoplasm of infected cell. In turn, high levels of cytoplasmic calcium may trigger membrane trafficking and transport of viral ER-associated proteins to viroplasms, sites of viral genome replication. In terms of biological role, induces and associates with structural rearrangements of intracellular membranes. Displays RNA-binding, nucleotide binding and NTPase activities. May play a role in virion morphogenesis and viral RNA encapsidation by interacting with the capsid protein VP3. Localizes the viral replication complex to the surface of membranous vesicles. Together with protein 3CD binds the Cis-Active RNA Element (CRE) which is involved in RNA synthesis initiation. Acts as a cofactor to stimulate the activity of 3D polymerase, maybe through a nucleid acid chaperone activity. Its function is as follows. Localizes the viral replication complex to the surface of membranous vesicles. It inhibits host cell endoplasmic reticulum-to-Golgi apparatus transport and causes the disassembly of the Golgi complex, possibly through GBF1 interaction. This would result in depletion of MHC, trail receptors and IFN receptors at the host cell surface. Plays an essential role in viral RNA replication by recruiting ACBD3 and PI4KB at the viral replication sites, thereby allowing the formation of the rearranged membranous structures where viral replication takes place. Functionally, acts as a primer for viral RNA replication and remains covalently bound to viral genomic RNA. VPg is uridylylated prior to priming replication into VPg-pUpU. The oriI viral genomic sequence may act as a template for this. The VPg-pUpU is then used as primer on the genomic RNA poly(A) by the RNA-dependent RNA polymerase to replicate the viral genome. During genome replication, the VPg-RNA linkage is removed by the host TDP2, thereby accelerating replication. During the late stage of the replication cycle, host TDP2 is excluded from sites of viral RNA synthesis and encapsidation, allowing for the generation of progeny virions. In terms of biological role, involved in the viral replication complex and viral polypeptide maturation. It exhibits protease activity with a specificity and catalytic efficiency that is different from protease 3C. Protein 3CD lacks polymerase activity. Protein 3CD binds to the 5'UTR of the viral genome. Replicates the viral genomic RNA on the surface of intracellular membranes. May form linear arrays of subunits that propagate along a strong head-to-tail interaction called interface-I. Covalently attaches UMP to a tyrosine of VPg, which is used to prime RNA synthesis. The positive stranded RNA genome is first replicated at virus induced membranous vesicles, creating a dsRNA genomic replication form. This dsRNA is then used as template to synthesize positive stranded RNA genomes. ss(+)RNA genomes are either translated, replicated or encapsidated. Its function is as follows. Major viral protease that mediates proteolytic processing of the polyprotein. Cleaves host EIF5B, contributing to host translation shutoff. Also cleaves host PABPC1, contributing to host translation shutoff. Cleaves host NLRP1, triggers host N-glycine-mediated degradation of the autoinhibitory NLRP1 N-terminal fragment. The polypeptide is Genome polyprotein (Coxsackievirus B4 (strain E2)).